The following is a 652-amino-acid chain: WD repeat-containing protein 70 (652 aa).

Disordered stretches follow at residues 1–22 and 45–171; these read MERP…LAVT and RRTA…IPDS. Residues 45 to 76 are compositionally biased toward basic and acidic residues; the sequence is RRTAVERSRKTLEAREREEEMNREKELRRQNE. Residues 92-102 are compositionally biased toward low complexity; sequence SKSSSRDTSSS. Acidic residues-rich tracts occupy residues 103–115 and 146–162; these read ESDE…DDEL and EDVE…EEEE. 7 WD repeats span residues 178 to 217, 225 to 266, 279 to 319, 328 to 367, 374 to 413, 419 to 464, and 467 to 506; these read HGTK…ASFK, CECH…ECIK, GHTA…KQKS, GKKV…HPKF, DPGT…KPLF, PTMF…RVYE, and ITDA…QRGA. Lysine 294 participates in a covalent cross-link: Glycyl lysine isopeptide (Lys-Gly) (interchain with G-Cter in SUMO2). The residue at position 450 (lysine 450) is an N6-acetyllysine. Residues 538-563 are compositionally biased toward basic and acidic residues; that stretch reads REPRQRSTRKQLEKDRLDPLKSHKPE. The interval 538–577 is disordered; it reads REPRQRSTRKQLEKDRLDPLKSHKPEPPVAGPGRGGRVGT. At threonine 577 the chain carries Phosphothreonine. Residues lysine 588 and lysine 594 each participate in a glycyl lysine isopeptide (Lys-Gly) (interchain with G-Cter in SUMO2) cross-link. 2 positions are modified to phosphoserine: serine 619 and serine 636. Residues 629–652 are disordered; that stretch reads TMFAQVESDDEETKNEPEWKKRKI. Positions 642 to 652 are enriched in basic and acidic residues; that stretch reads KNEPEWKKRKI.

This sequence belongs to the WD repeat GAD-1 family.

The chain is WD repeat-containing protein 70 (WDR70) from Bos taurus (Bovine).